The following is a 249-amino-acid chain: 3-deoxy-manno-octulosonate cytidylyltransferase (249 aa).

This sequence belongs to the KdsB family.

Its subcellular location is the cytoplasm. It carries out the reaction 3-deoxy-alpha-D-manno-oct-2-ulosonate + CTP = CMP-3-deoxy-beta-D-manno-octulosonate + diphosphate. The protein operates within nucleotide-sugar biosynthesis; CMP-3-deoxy-D-manno-octulosonate biosynthesis; CMP-3-deoxy-D-manno-octulosonate from 3-deoxy-D-manno-octulosonate and CTP: step 1/1. It participates in bacterial outer membrane biogenesis; lipopolysaccharide biosynthesis. Activates KDO (a required 8-carbon sugar) for incorporation into bacterial lipopolysaccharide in Gram-negative bacteria. The chain is 3-deoxy-manno-octulosonate cytidylyltransferase from Oleidesulfovibrio alaskensis (strain ATCC BAA-1058 / DSM 17464 / G20) (Desulfovibrio alaskensis).